Here is a 681-residue protein sequence, read N- to C-terminus: Transcriptional regulator prz1 (681 aa).

Basic and acidic residues predominate over residues Met-1 to Asp-15. Disordered regions lie at residues Met-1 to Asp-29, Asn-66 to Pro-96, Ser-340 to Phe-372, Pro-410 to Leu-433, and Lys-520 to Glu-563. 2 stretches are compositionally biased toward polar residues: residues Asn-66–Ser-86 and Ser-340–Glu-358. Residues Pro-416–Leu-428 are compositionally biased toward low complexity. Residues Ser-528–Gly-549 show a composition bias toward polar residues. Residues Ser-543 and Ser-546 each carry the phosphoserine modification. Residues Asn-550–Lys-559 show a composition bias toward low complexity. 2 consecutive C2H2-type zinc fingers follow at residues Tyr-570–His-594 and Phe-600–His-622. Residues Phe-628 to Glu-650 form a C2H2-type 3; degenerate zinc finger. Residues Arg-662 to Lys-681 form a disordered region.

It belongs to the EGR C2H2-type zinc-finger protein family. Post-translationally, phosphorylated. Dephosphorylated by calcineurin which leads to rapid translocation from the cytoplasm to the nucleus.

It is found in the nucleus. It localises to the cytoplasm. In terms of biological role, involved in the regulation of calcium ion homeostasis. Binds to the calcineurin-dependent response element. Transcriptionally regulates pmc1. This is Transcriptional regulator prz1 (prz1) from Schizosaccharomyces pombe (strain 972 / ATCC 24843) (Fission yeast).